We begin with the raw amino-acid sequence, 984 residues long: Ubiquitin conjugation factor E4 ufd-2 (984 aa).

In terms of domain architecture, U-box spans 909 to 982; the sequence is DVPEEFKDPI…QEWICQKRNS (74 aa).

The protein belongs to the ubiquitin conjugation factor E4 family. As to quaternary structure, forms a complex composed of deubiquitinating enzyme atx-3, E4 ubiquitin-protein ligase ufd-2 and cdc-48.1; within the complex interacts with atx-3 and cdc-48.1 (via DDDLYN motif). Forms a complex composed of cdc-48.1, myosin chaperone unc-45, ubiquitin-protein ligases ufd-2 and chn-1; the complex targets myosin chaperone unc-45 for proteasomal degradation; within the complex interacts with cdc-48.1 (via DDDLYN motif), chn-1 and unc-45. Forms a complex composed of unc-45 and myosin heavy chain B unc-54; the complex targets unfolded unc-54 for proteasomal degradation; within the complex interacts with unc-45 (via TPR domain) and unc-54. Interacts with cdc-48.2 (via DDDLYN motif). In terms of tissue distribution, expressed in the germline (at protein level).

The protein resides in the cytoplasm. The protein localises to the nucleus membrane. Its subcellular location is the nucleus. It is found in the nucleolus. The catalysed reaction is S-ubiquitinyl-[E2 ubiquitin-conjugating enzyme]-L-cysteine + [acceptor protein]-L-lysine = [E2 ubiquitin-conjugating enzyme]-L-cysteine + N(6)-ubiquitinyl-[acceptor protein]-L-lysine.. Its pathway is protein modification; protein ubiquitination. Acts as an E4 ubiquitin ligase mediating the assembly of polyubiquitin chains on substrates ubiquitinated by another E3 ubiquitin ligase. The elongation of preexisting ubiquitin chains preferentially targets ubiquitin 'Lys-29' and 'Lys-48' residues. Also functions as an E3 ligase in conjunction with specific E1 and E2 ligases. Probably by regulating protein ubiquitination at DNA damage repair sites, coordinates DNA double-strand-break repair and apoptosis in the germline. Required for germline apoptosis in response to DNA damage downstream of cep-1. Involved in the resolution of DNA-repair sites by promoting the release of rad-51 from DNA damage foci. In association with protein-ligase chn-1, acts as an E3/E4 ligase to poly-ubiquitinate lysine residues in the UCS domain of myosin chaperone unc-45. By targeting myosin chaperone unc-45 for proteasomal degradation, regulates myosin assembly in body wall muscles in association with cdc-48.1 and chn-1. However, in a contrasting study, acts as an E3 ligase, independently of chn-1, to poly-ubiquitinate unc-45 without promoting unc-45 proteasomal degradation. Instead, uses unc-45 as an adapter protein to recruit and poly-ubiquitinate unfolded myosin heavy chain B unc-54. This Caenorhabditis elegans protein is Ubiquitin conjugation factor E4 ufd-2.